We begin with the raw amino-acid sequence, 283 residues long: Shikimate dehydrogenase (NADP(+)) (283 aa).

Shikimate contacts are provided by residues 18–20 (SYS) and T66. K70 serves as the catalytic Proton acceptor. N91 and D106 together coordinate shikimate. Residues 130-134 (GAGGA) and M225 each bind NADP(+). Y227 serves as a coordination point for shikimate. G248 is a binding site for NADP(+).

It belongs to the shikimate dehydrogenase family. In terms of assembly, homodimer.

It carries out the reaction shikimate + NADP(+) = 3-dehydroshikimate + NADPH + H(+). It functions in the pathway metabolic intermediate biosynthesis; chorismate biosynthesis; chorismate from D-erythrose 4-phosphate and phosphoenolpyruvate: step 4/7. Its function is as follows. Involved in the biosynthesis of the chorismate, which leads to the biosynthesis of aromatic amino acids. Catalyzes the reversible NADPH linked reduction of 3-dehydroshikimate (DHSA) to yield shikimate (SA). This is Shikimate dehydrogenase (NADP(+)) from Pelodictyon phaeoclathratiforme (strain DSM 5477 / BU-1).